The sequence spans 365 residues: Protein RecA (365 aa).

Position 77–84 (77–84) interacts with ATP; the sequence is GPESSGKT.

This sequence belongs to the RecA family.

It is found in the cytoplasm. Its function is as follows. Can catalyze the hydrolysis of ATP in the presence of single-stranded DNA, the ATP-dependent uptake of single-stranded DNA by duplex DNA, and the ATP-dependent hybridization of homologous single-stranded DNAs. It interacts with LexA causing its activation and leading to its autocatalytic cleavage. The protein is Protein RecA of Mesorhizobium japonicum (strain LMG 29417 / CECT 9101 / MAFF 303099) (Mesorhizobium loti (strain MAFF 303099)).